The primary structure comprises 428 residues: AP2-like ethylene-responsive transcription factor At2g41710 (428 aa).

A compositionally biased stretch (polar residues) spans 1–10 (MASVSSSDQG). Residues 1 to 28 (MASVSSSDQGPKTEAGCSGGGGGESSET) are disordered. The segment at residues 70-136 (IYRGVTRHRW…WGPGTLINFP (67 aa)) is a DNA-binding region (AP2/ERF).

This sequence belongs to the AP2/ERF transcription factor family. AP2 subfamily.

Its subcellular location is the nucleus. Its function is as follows. Probably acts as a transcriptional activator. Binds to the GCC-box pathogenesis-related promoter element. May be involved in the regulation of gene expression by stress factors and by components of stress signal transduction pathways. The protein is AP2-like ethylene-responsive transcription factor At2g41710 of Arabidopsis thaliana (Mouse-ear cress).